Consider the following 382-residue polypeptide: Flap endonuclease 1 (382 aa).

The N-domain stretch occupies residues 1–104 (MGIKGLSQVI…GELEKRSERR (104 aa)). Asp34 lines the Mg(2+) pocket. The DNA site is built by Arg47 and Arg70. Mg(2+) is bound by residues Asp86, Glu158, Glu160, Asp179, and Asp181. Positions 122–253 (EAEKFERRLV…KKAVELIRQH (132 aa)) are I-domain. Glu158 serves as a coordination point for DNA. Gly231 and Asp233 together coordinate DNA. Residue Asp233 coordinates Mg(2+). Positions 336–344 (TQGRIDSFF) are interaction with PCNA. Residues 358–382 (KRKAEEAEKAKKGAKKGGPPKKRAK) are disordered. Positions 359-368 (RKAEEAEKAK) are enriched in basic and acidic residues. Residues 369-382 (KGAKKGGPPKKRAK) are compositionally biased toward basic residues.

It belongs to the XPG/RAD2 endonuclease family. FEN1 subfamily. Interacts with PCNA. Three molecules of crn-1 bind to one PCNA trimer with each molecule binding to one PCNA monomer. PCNA stimulates the nuclease activity without altering cleavage specificity. Interacts with cps-6. Mg(2+) is required as a cofactor. In terms of processing, phosphorylated. Phosphorylation upon DNA damage induces relocalization to the nuclear plasma.

The protein resides in the nucleus. It is found in the nucleolus. It localises to the nucleoplasm. Its subcellular location is the mitochondrion. In terms of biological role, structure-specific nuclease with 5'-flap endonuclease and 5'-3' exonuclease activities involved in DNA replication and repair. During DNA replication, cleaves the 5'-overhanging flap structure that is generated by displacement synthesis when DNA polymerase encounters the 5'-end of a downstream Okazaki fragment. It enters the flap from the 5'-end and then tracks to cleave the flap base, leaving a nick for ligation. Also involved in the long patch base excision repair (LP-BER) pathway, by cleaving within the apurinic/apyrimidinic (AP) site-terminated flap. Acts as a genome stabilization factor that prevents flaps from equilibrating into structures that lead to duplications and deletions. Also possesses 5'-3' exonuclease activity on nicked or gapped double-stranded DNA, and exhibits RNase H activity. Also involved in replication and repair of rDNA and in repairing mitochondrial DNA. Can associate and cooperate with cps-6 to promote stepwise DNA fragmentation, utilizing the endonuclease activity of cps-6 and both of its own 5'-3' exonuclease activity and gap-dependent endonuclease activity. May play a critical role in switching the state of cells from DNA replication/repair to DNA degradation during apoptosis. This Caenorhabditis elegans protein is Flap endonuclease 1.